The primary structure comprises 76 residues: Small ribosomal subunit protein bS18 (76 aa).

This sequence belongs to the bacterial ribosomal protein bS18 family. As to quaternary structure, part of the 30S ribosomal subunit. Forms a tight heterodimer with protein bS6.

Functionally, binds as a heterodimer with protein bS6 to the central domain of the 16S rRNA, where it helps stabilize the platform of the 30S subunit. The protein is Small ribosomal subunit protein bS18 of Xylella fastidiosa (strain M23).